The following is a 118-amino-acid chain: Large ribosomal subunit protein uL18 (118 aa).

This sequence belongs to the universal ribosomal protein uL18 family. In terms of assembly, part of the 50S ribosomal subunit; part of the 5S rRNA/L5/L18/L25 subcomplex. Contacts the 5S and 23S rRNAs.

This is one of the proteins that bind and probably mediate the attachment of the 5S RNA into the large ribosomal subunit, where it forms part of the central protuberance. This chain is Large ribosomal subunit protein uL18, found in Campylobacter jejuni subsp. doylei (strain ATCC BAA-1458 / RM4099 / 269.97).